Consider the following 303-residue polypeptide: Aspartate carbamoyltransferase catalytic subunit (303 aa).

Carbamoyl phosphate-binding residues include Arg-49 and Thr-50. An L-aspartate-binding site is contributed by Lys-77. Positions 99, 126, and 129 each coordinate carbamoyl phosphate. The L-aspartate site is built by Arg-159 and Arg-211. Ser-252 and Pro-253 together coordinate carbamoyl phosphate.

Belongs to the aspartate/ornithine carbamoyltransferase superfamily. ATCase family. As to quaternary structure, heterododecamer (2C3:3R2) of six catalytic PyrB chains organized as two trimers (C3), and six regulatory PyrI chains organized as three dimers (R2).

It catalyses the reaction carbamoyl phosphate + L-aspartate = N-carbamoyl-L-aspartate + phosphate + H(+). Its pathway is pyrimidine metabolism; UMP biosynthesis via de novo pathway; (S)-dihydroorotate from bicarbonate: step 2/3. Its function is as follows. Catalyzes the condensation of carbamoyl phosphate and aspartate to form carbamoyl aspartate and inorganic phosphate, the committed step in the de novo pyrimidine nucleotide biosynthesis pathway. The chain is Aspartate carbamoyltransferase catalytic subunit from Listeria monocytogenes serotype 4b (strain F2365).